The sequence spans 71 residues: KREHEKEVLQKAIEENNNFSKMAEEKLTTKMEAIKENREAQMAAKLERLREKDKKLEEIRKGKECKEPSED.

A coiled-coil region spans residues 1–67; it reads KREHEKEVLQ…EIRKGKECKE (67 aa). Residues 1–71 form the SLD domain; it reads KREHEKEVLQ…GKECKEPSED (71 aa).

It belongs to the stathmin family. In terms of assembly, binds to two alpha/beta-tubulin heterodimers. Post-translationally, from unphosphorylated forms to highly phosphorylated ones in the mature egg, followed by progressive dephosphorylation from the mid-blastula to the tailbud stage. Ubiquitous. Mostly abundant in brain and oocytes.

The protein localises to the cytoplasm. It is found in the cytoskeleton. Involved in the regulation of the microtubule (MT) filament system by destabilizing microtubules. It prevents assembly and promotes disassembly of microtubules. This is Stathmin-1-B (stmn1-b) from Xenopus laevis (African clawed frog).